Here is a 296-residue protein sequence, read N- to C-terminus: Cyclin-dependent kinase 1 (296 aa).

The Protein kinase domain maps to 5–288; sequence FQKLEKIGEG…AKNGLSHKYF (284 aa). Residues 11 to 19 and Lys-34 each bind ATP; that span reads IGEGTYGVV. Asp-130 acts as the Proton acceptor in catalysis.

This sequence belongs to the protein kinase superfamily. CMGC Ser/Thr protein kinase family. CDC2/CDKX subfamily.

It localises to the nucleus. The catalysed reaction is L-seryl-[protein] + ATP = O-phospho-L-seryl-[protein] + ADP + H(+). It catalyses the reaction L-threonyl-[protein] + ATP = O-phospho-L-threonyl-[protein] + ADP + H(+). Functionally, cyclin-dependent kinase that acts as a master regulator of the mitotic and meiotic cell cycles. In Encephalitozoon cuniculi (strain GB-M1) (Microsporidian parasite), this protein is Cyclin-dependent kinase 1.